Consider the following 281-residue polypeptide: MTESPLSAPAPTSNQSPAPEQTFGTAGIAPMDRPSAMTRFFMSIVAWAESLNLKYAKLGNPPVYDTATFPWAAEIEKDYPAIRAELEKVLLRQSELPTFQDISTDVKTISTDTRWKTFFLLGFGVKSEQNIKACPNTWAAVQKIPGLTTAMFSIFEPGKHLPAHRGPYNGVLRLHLGLIVPEPNDKLAIRVDNQVCHWQEGKALIFDDAYEHEAWNHTDKTRVVLFVDFVKPLKSPARFVNWALMNLAIFTPFIKEGLDNHKEWEKKFYAEAEAFRNRPKP.

A compositionally biased stretch (polar residues) spans 1–24 (MTESPLSAPAPTSNQSPAPEQTFG). A disordered region spans residues 1 to 29 (MTESPLSAPAPTSNQSPAPEQTFGTAGIA).

The protein belongs to the aspartyl/asparaginyl beta-hydroxylase family.

It carries out the reaction an N(2)-[(3R)-3-(2-saturated-acyloxy)acyl]-L-ornithine lipid + 2-oxoglutarate + O2 = a 2-hydroxyornithine lipid + succinate + CO2. It participates in lipid metabolism. Functionally, involved in the biosynthesis of ornithine lipids (OLs), which are phosphorus-free membrane lipids. Catalyzes the hydroxylation at the 2 position of the secondary fatty acid of OL. Contributes to symbiotic performance and acid tolerance. The protein is Ornithine lipid ester-linked acyl 2-hydroxylase of Rhizobium tropici.